The sequence spans 171 residues: MSHRNDSSRKHRKSRSIKNDQHYPTVSFDGAESVDIPADEGKSPVSTHLSLASNPTEFKFMDEIALLKRGRIDKDAPKHPYNRRGQQPMMKKEISVTSAHSNSSLPVRSPAIMTLMGGVPEAEKEYNVGKGGLLKISKMKEGGKRYEVSANERFTVFQQTAGQTCLFTFKA.

2 disordered regions span residues 1-50 and 71-91; these read MSHR…THLS and RIDKDAPKHPYNRRGQQPMMK.

This is an uncharacterized protein from Caenorhabditis elegans.